Here is a 201-residue protein sequence, read N- to C-terminus: Ribonuclease HII (201 aa).

An RNase H type-2 domain is found at 12–201; the sequence is DLVAGVDEVG…VRELLDASVE (190 aa). Asp18, Glu19, and Asp110 together coordinate a divalent metal cation.

It belongs to the RNase HII family. It depends on Mn(2+) as a cofactor. Mg(2+) serves as cofactor.

It localises to the cytoplasm. It carries out the reaction Endonucleolytic cleavage to 5'-phosphomonoester.. Functionally, endonuclease that specifically degrades the RNA of RNA-DNA hybrids. This Pseudomonas paraeruginosa (strain DSM 24068 / PA7) (Pseudomonas aeruginosa (strain PA7)) protein is Ribonuclease HII.